A 193-amino-acid chain; its full sequence is Dual-action ribosomal maturation protein DarP (193 aa).

Over residues 1–10 (MRGRDEDTGE) the composition is skewed to basic and acidic residues. 2 disordered regions span residues 1–20 (MRGR…SQQR) and 171–193 (QEQG…EDDE). Acidic residues predominate over residues 181-193 (GLEDGESALEDDE).

The protein belongs to the DarP family.

Its subcellular location is the cytoplasm. Member of a network of 50S ribosomal subunit biogenesis factors which assembles along the 30S-50S interface, preventing incorrect 23S rRNA structures from forming. Promotes peptidyl transferase center (PTC) maturation. The chain is Dual-action ribosomal maturation protein DarP from Xanthomonas oryzae pv. oryzae (strain MAFF 311018).